The sequence spans 701 residues: UvrABC system protein B (701 aa).

Residues 28–188 form the Helicase ATP-binding domain; that stretch reads RRIRAGERDV…VDVQYTRNDL (161 aa). 41 to 48 contributes to the ATP binding site; sequence GATGTGKS. Residues 94–117 carry the Beta-hairpin motif; it reads YYDYYQPEAYIAQTDTYIEKDSSI. The Helicase C-terminal domain occupies 432–598; it reads QIDDLIGEIR…PLRKKIADIL (167 aa). Positions 606–636 are disordered; sequence DDTEAAESVPIGGSGRNSSRGRRAQGEPGRA. Residues 656 to 691 form the UVR domain; that stretch reads ADLIKDLTSQMMVAARDLQFELAARFRDEIADLKKE.

This sequence belongs to the UvrB family. As to quaternary structure, forms a heterotetramer with UvrA during the search for lesions. Interacts with UvrC in an incision complex.

Its subcellular location is the cytoplasm. The UvrABC repair system catalyzes the recognition and processing of DNA lesions. A damage recognition complex composed of 2 UvrA and 2 UvrB subunits scans DNA for abnormalities. Upon binding of the UvrA(2)B(2) complex to a putative damaged site, the DNA wraps around one UvrB monomer. DNA wrap is dependent on ATP binding by UvrB and probably causes local melting of the DNA helix, facilitating insertion of UvrB beta-hairpin between the DNA strands. Then UvrB probes one DNA strand for the presence of a lesion. If a lesion is found the UvrA subunits dissociate and the UvrB-DNA preincision complex is formed. This complex is subsequently bound by UvrC and the second UvrB is released. If no lesion is found, the DNA wraps around the other UvrB subunit that will check the other stand for damage. This is UvrABC system protein B from Mycobacterium ulcerans (strain Agy99).